A 490-amino-acid chain; its full sequence is Cytochrome P450 2C55 (490 aa).

Cys-435 provides a ligand contact to heme.

Belongs to the cytochrome P450 family. Requires heme as cofactor.

The protein localises to the endoplasmic reticulum membrane. It is found in the microsome membrane. The catalysed reaction is an organic molecule + reduced [NADPH--hemoprotein reductase] + O2 = an alcohol + oxidized [NADPH--hemoprotein reductase] + H2O + H(+). Its function is as follows. Metabolizes arachidonic acid mainly to 19-hydroxyeicosatetraenoic acid (HETE). The polypeptide is Cytochrome P450 2C55 (Cyp2c55) (Rattus norvegicus (Rat)).